We begin with the raw amino-acid sequence, 239 residues long: MTPPNDARITLMNYDDPLEWAQSVTRELENILLQEITQRGRASLLLSGGTTPARVYETLATRPLDWSKIDIGLVDERWLSPQDKDSNAWLVRHTLLEHAKHATFLPLIRPGKTLNQCVHDANLQITHSPPPCAAVLGMGNDGHTASLFPGSLDLPKAISTLQPYVALDATGCPGAGVWPLRITLTPAGLSNIPHRLLLLCGKQKMQVLETALSCKDALDYPIRTAIDLPNARLRVHWCA.

It belongs to the glucosamine/galactosamine-6-phosphate isomerase family. 6-phosphogluconolactonase subfamily.

The catalysed reaction is 6-phospho-D-glucono-1,5-lactone + H2O = 6-phospho-D-gluconate + H(+). It functions in the pathway carbohydrate degradation; pentose phosphate pathway; D-ribulose 5-phosphate from D-glucose 6-phosphate (oxidative stage): step 2/3. Functionally, hydrolysis of 6-phosphogluconolactone to 6-phosphogluconate. In Xylella fastidiosa (strain 9a5c), this protein is 6-phosphogluconolactonase (pgl).